Here is a 281-residue protein sequence, read N- to C-terminus: Bifunctional protein FolD 1 (281 aa).

NADP(+) is bound by residues 165 to 167 (GRS), S190, and I231.

It belongs to the tetrahydrofolate dehydrogenase/cyclohydrolase family. As to quaternary structure, homodimer.

The catalysed reaction is (6R)-5,10-methylene-5,6,7,8-tetrahydrofolate + NADP(+) = (6R)-5,10-methenyltetrahydrofolate + NADPH. It catalyses the reaction (6R)-5,10-methenyltetrahydrofolate + H2O = (6R)-10-formyltetrahydrofolate + H(+). Its pathway is one-carbon metabolism; tetrahydrofolate interconversion. Catalyzes the oxidation of 5,10-methylenetetrahydrofolate to 5,10-methenyltetrahydrofolate and then the hydrolysis of 5,10-methenyltetrahydrofolate to 10-formyltetrahydrofolate. This chain is Bifunctional protein FolD 1, found in Desulfitobacterium hafniense (strain Y51).